A 780-amino-acid polypeptide reads, in one-letter code: Cullin-5 (780 aa).

Phosphoserine is present on Ser34. Position 210 is a phosphothreonine (Thr210). Positions 711 to 772 (RILRTQEAII…HRYIRRDEAD (62 aa)) constitute a Cullin neddylation domain. Lys724 participates in a covalent cross-link: Glycyl lysine isopeptide (Lys-Gly) (interchain with G-Cter in NEDD8).

It belongs to the cullin family. As to quaternary structure, component of multiple cullin-5-RING E3 ubiquitin-protein ligase complexes (ECS complexes, also named CRL5 complexes) formed of CUL5, Elongin BC (ELOB and ELOC), RNF7/RBX2 and a variable SOCS box domain-containing protein as substrate-specific recognition component. CUL5-containing ECS complexes specifically contain RNF7/RBX2, and not RBX1, as catalytic subunit. Component of the ECS(ASB2) complex with the substrate recognition component ASB2. Component of the ECS(ASB6) complex with the substrate recognition component ASB6. Component of the ECS(ASB7) complex with the substrate recognition component ASB7. Component of the ECS(ASB9) complex with the substrate recognition component ASB9. Component of the ECS(ASB11) complex with the substrate recognition component ASB11. Component of the ECS(ASB12) complex with the substrate recognition component ASB12. Component of the ECS(LRRC41) complex with the substrate recognition component LRRC41. Component of the ECS(SOCS1) complex with the substrate recognition component SOCS1. Component of the ECS(SOCS2) complex with the substrate recognition component SOCS2. Component of the ECS(WSB1) complex with the substrate recognition subunit WSB1. Component of the ECS(SOCS3) complex with the substrate recognition component SOCS3. Component of the ECS(SOCS7) complex with the substrate recognition component SOCS7. Component of the ECS(SPSB1) complex with the substrate recognition component SPSB1. Component of the ECS(SPSB3) complex with the substrate recognition component SPSB3. Component of the ECS(SPSB2) complex with the substrate recognition component SPSB2. Component of the ECS(SPSB4) complex with the substrate recognition component SPSB4. Component of the ECS(RAB40) complex with the substrate recognition subunit RAB40A, RAB40B or RAB40C. Component of the ECS(KLHDC1) complex with the substrate recognition component KLHDC1. Component of the ECS(PCMTD1) complex with the substrate recognition subunit PCMTD1. May also form complexes containing RBX1 and ELOA or VHL; additional evidence is however required to confirm this result in vivo. Interacts (when neddylated) with ARIH2; leading to activate the E3 ligase activity of ARIH2. Interacts with ERCC6; the interaction is induced by DNA damaging agents or inhibitors of RNA polymerase II elongation. Interacts with ELOA (via the BC-box). Interacts (unneddylated form) with DCUN1D1, DCUN1D2, DCUN1D3, DCUN1D4 and DCUN1D5; these interactions promote the cullin neddylation. Neddylated; which enhances the ubiquitination activity of ECS complexes and prevents binding of the inhibitor CAND1. Deneddylated via its interaction with the COP9 signalosome (CSN).

It localises to the nucleus. The protein operates within protein modification; protein ubiquitination. Its function is as follows. Core component of multiple cullin-5-RING E3 ubiquitin-protein ligase complexes (ECS complexes, also named CRL5 complexes), which mediate the ubiquitination and subsequent proteasomal degradation of target proteins. Acts a scaffold protein that contributes to catalysis through positioning of the substrate and the ubiquitin-conjugating enzyme. The functional specificity of the E3 ubiquitin-protein ligase complex depends on the variable SOCS box-containing substrate recognition component. Acts as a key regulator of neuron positioning during cortex development: component of various SOCS-containing ECS complexes, such as the ECS(SOCS7) complex, that regulate reelin signaling by mediating ubiquitination and degradation of DAB1. ECS(SOCS1) seems to direct ubiquitination of JAK2. The ECS(SOCS2) complex mediates the ubiquitination and subsequent proteasomal degradation of phosphorylated EPOR and GHR. The ECS(SPSB3) complex catalyzes ubiquitination of nuclear CGAS. ECS(KLHDC1) complex is part of the DesCEND (destruction via C-end degrons) pathway and mediates ubiquitination and degradation of truncated SELENOS selenoprotein produced by failed UGA/Sec decoding, which ends with a glycine. The ECS(ASB9) complex mediates ubiquitination and degradation of CKB. As part of some ECS complex, promotes 'Lys-11'-linked ubiquitination and degradation of BTRC. As part of a multisubunit ECS complex, polyubiquitinates monoubiquitinated POLR2A. As part of the ECS(RAB40C) complex, mediates ANKRD28 ubiquitination and degradation, thereby regulating protein phosphatase 6 (PP6) complex activity and focal adhesion assembly during cell migration. As part of the ECS(RAB40A) complex, mediates RHOU 'Lys-48'-linked ubiquitination and degradation, thus inhibiting focal adhesion disassembly during cell migration. As part of the ECS(RAB40B) complex, mediates LIMA1/EPLIN and RAP2 ubiquitination, thereby regulating actin cytoskeleton dynamics and stress fiber formation during cell migration. May form a cell surface vasopressin receptor. The sequence is that of Cullin-5 from Mus musculus (Mouse).